Reading from the N-terminus, the 418-residue chain is MIHSLFLINSAGDIFLEKHWKSVVSRSVCDYFFEAQERATEAENVPPVIPTPHHYLLSVYRHKIFFVAVIQTEVPPLFVIEFLHRVVDTFQDYFGVCSEPVIKDNVVVVYEVLEEMLDNGFPLATESNILKELIKPPTILRTVVNTITGSTNVGDQLPTGQLSVVPWRRTGVKYTNNEAYFDVVEEIDAIIDKSGSTVTAEIQGVIDACVKLTGMPDLTLSFMNPRLLDDVSFHPCVRFKRWESERILSFIPPDGNFRLLSYHVSAQNLVAIPVYVKHSISFRDSGSLGRFEITVGPKQTMGKTIEGVTVTSQMPKGVLNMSLTPSQGTHTFDPVTKMLSWDVGKINPQKLPSLKGTMGLQVGASKPDENPTINLQFKIQQLAISGLKVNRLDMYGEKYKPFKGIKYMTKAGKFQVRT.

Positions 176-417 (NNEAYFDVVE…MTKAGKFQVR (242 aa)) constitute an MHD domain.

This sequence belongs to the adaptor complexes medium subunit family. As to quaternary structure, adaptor protein complex 3 (AP-3) is a heterotetramer composed of two large adaptins (delta-type subunit AP3D1 and beta-type subunit AP3B1 or AP3B2), a medium adaptin (mu-type subunit AP3M1 or AP3M2) and a small adaptin (sigma-type subunit APS1 or AP3S2). AP-3 associates with the BLOC-1 complex.

The protein localises to the golgi apparatus. It is found in the cytoplasmic vesicle membrane. In terms of biological role, component of the adaptor complexes which link clathrin to receptors in coated vesicles. Clathrin-associated protein complexes are believed to interact with the cytoplasmic tails of membrane proteins, leading to their selection and concentration. Ap47 is a subunit of the plasma membrane adaptor. In concert with the BLOC-1 complex, AP-3 is required to target cargos into vesicles assembled at cell bodies for delivery into neurites and nerve terminals. This chain is AP-3 complex subunit mu-2 (Ap3m2), found in Rattus norvegicus (Rat).